The following is a 114-amino-acid chain: Nucleoid-associated protein Clos_2855 (114 aa).

Belongs to the YbaB/EbfC family. In terms of assembly, homodimer.

It localises to the cytoplasm. It is found in the nucleoid. Its function is as follows. Binds to DNA and alters its conformation. May be involved in regulation of gene expression, nucleoid organization and DNA protection. This chain is Nucleoid-associated protein Clos_2855, found in Alkaliphilus oremlandii (strain OhILAs) (Clostridium oremlandii (strain OhILAs)).